We begin with the raw amino-acid sequence, 224 residues long: Response regulator protein GraR (224 aa).

A Response regulatory domain is found at 2–115; it reads QVLLVEDDQT…VLIAKLQAIY (114 aa). D51 is subject to 4-aspartylphosphate. A DNA-binding region (ompR/PhoB-type) is located at residues 126–224; sequence KRTLNWQDAL…KVGKGYMAHE (99 aa).

Phosphorylated by GraS.

It is found in the cytoplasm. In terms of biological role, member of the two-component regulatory system GraR/GraS involved in resistance against cationic antimicrobial peptides (CAMPs). The chain is Response regulator protein GraR (graR) from Staphylococcus haemolyticus (strain JCSC1435).